The sequence spans 134 residues: MDPQTAPSRALLLLLFLHLAFLGGRSHPLGSPGSASDLETSGLQEQRNHLQGKLSELQVEQTSLEPLQESPRPTGVWKSREVATEGIRGHRKMVLYTLRAPRSPKMVQGSGCFGRKMDRISSSSGLGCKVLRRH.

Positions 1 to 26 (MDPQTAPSRALLLLLFLHLAFLGGRS) are cleaved as a signal peptide. Ser41 carries an O-linked (Xyl...) (chondroitin sulfate) serine glycan. Thr62 carries an O-linked (HexNAc...) threonine; Partial glycan. O-linked (HexNAc...) serine glycans are attached at residues Ser63 and Ser70. O-linked (HexNAc...) threonine glycosylation occurs at Thr74. An O-linked (HexNAc...) serine glycan is attached at Ser79. Residue Thr84 is glycosylated (O-linked (HexNAc...) threonine; Partial). Thr97 carries an O-linked (HexNAc...) threonine glycan. A disulfide bond links Cys112 and Cys128.

The protein belongs to the natriuretic peptide family. The precursor molecule is proteolytically cleaved by the endoproteases FURIN or CORIN at Arg-102 to produce brain natriuretic peptide 32 and NT-proBNP. This likely occurs after it has been secreted into the blood, either during circulation or in the target cells. CORIN also cleaves the precursor molecule at additional residues including Arg-99 and possibly Lys-105. In patients with heart failure, processing and degradation of natriuretic peptides B occurs but is delayed, possibly due to a decrease in enzyme level or activity of CORIN and DPP4. In terms of processing, undergoes further proteolytic cleavage by various proteases such as DPP4, MME and possibly FAP, to give rise to a variety of shorter peptides. Cleaved at Pro-104 by the prolyl endopeptidase FAP (seprase) activity (in vitro). Degraded by IDE. During IDE degradation, the resulting products initially increase the activation of NPR1 and can also stimulate NPR2 to produce cGMP before the fragments are completely degraded and inactivated by IDE (in vitro). Post-translationally, O-glycosylated on at least seven residues. In cardiomyocytes, glycosylation at Thr-97 is essential for the stability and processing of the extracellular natriuretic peptides B. Glycosylation, especially at Thr-97, may also be important for brain natriuretic peptide 32 stability and/or extracellular distribution. Glycosylation at Thr-97 appears to inhibit FURIN- or CORIN-mediated proteolytic processing, at least in HEK293 cells. In terms of tissue distribution, detected in the cardiac atria (at protein level). Detected in the kidney distal tubular cells (at protein level).

The protein resides in the secreted. Its function is as follows. Cardiac hormone that plays a key role in mediating cardio-renal homeostasis. May also function as a paracrine antifibrotic factor in the heart. Acts by specifically binding and stimulating NPR1 to produce cGMP, which in turn activates effector proteins that drive various biological responses. Involved in regulating the extracellular fluid volume and maintaining the fluid-electrolyte balance through natriuresis, diuresis, vasorelaxation, and inhibition of renin and aldosterone secretion. Binds the clearance receptor NPR3. May affect cardio-renal homeostasis. Able to promote the production of cGMP although its potency is very low compared to brain natriuretic peptide 32. Functionally, may have a role in cardio-renal homeostasis. Able to promote the production of cGMP. This is Natriuretic peptides B (NPPB) from Homo sapiens (Human).